A 207-amino-acid polypeptide reads, in one-letter code: Nudix hydrolase 4 (207 aa).

One can recognise a Nudix hydrolase domain in the interval 58-194; it reads GYRQVVGCVP…WMREALEAFI (137 aa). The short motif at 101–122 is the Nudix box element; the sequence is GGWETDESMEEAALRETIEEAG. Mg(2+) contacts are provided by E116 and E120.

The protein belongs to the Nudix hydrolase family. Mg(2+) is required as a cofactor. The cofactor is Mn(2+). Expressed in roots, stems and leaves.

The catalysed reaction is ADP-D-ribose + H2O = D-ribose 5-phosphate + AMP + 2 H(+). It catalyses the reaction NAD(+) + H2O = beta-nicotinamide D-ribonucleotide + AMP + 2 H(+). It carries out the reaction NADH + H2O = reduced beta-nicotinamide D-ribonucleotide + AMP + 2 H(+). In terms of biological role, probably mediates the hydrolysis of some nucleoside diphosphate derivatives. In vitro, it can use both NADH and ADP-ribose as substrates; however the relevance of such substrates in vivo is unclear. The sequence is that of Nudix hydrolase 4 (NUDT4) from Arabidopsis thaliana (Mouse-ear cress).